Consider the following 347-residue polypeptide: MAAASRPSWWQRWRRRAWARDGAKLLLFLLLLGSGPGPRHVRAGQAVEYLKREHSLSKPYQGVGTSSSSLWNLMGNAMVMTQYIRLTPDMQSKQGALWNRVPCFLKDWELQVHFKIHGQGKKNLHGDGLAIWYTKDRMQPGPVFGNMDKFVGLGVFVDTYPNEEKQHERVFPYISAMVNNGSLSYDHERDGRPTELGGCTAIVRNIRYDTFLVIRYVKRHLTIMMDIDGKHEWRDCIEMPGVRLPRGYYFGTSSITGDLSDNHDVISLKLFELTGVRTPEEEKLHRDVFLPSVDNLKLPEMTVPPTPLSGLALFLIVFFSLVFSVFAIVIGIILYNKWQDQSRKRFY.

A signal peptide spans 1–43 (MAAASRPSWWQRWRRRAWARDGAKLLLFLLLLGSGPGPRHVRA). At 44 to 312 (GQAVEYLKRE…VPPTPLSGLA (269 aa)) the chain is on the lumenal side. Positions 48 to 273 (EYLKREHSLS…DVISLKLFEL (226 aa)) constitute an L-type lectin-like domain. Positions 92 and 127 each coordinate a carbohydrate. Positions 158, 160, and 162 each coordinate Ca(2+). Residue 160 to 162 (YPN) coordinates a carbohydrate. Asn180 is a glycosylation site (N-linked (GlcNAc...) asparagine). His187 is a binding site for a carbohydrate. Asp190 is a Ca(2+) binding site. Cysteines 199 and 236 form a disulfide. 257–259 (GDL) contributes to the a carbohydrate binding site. A helical membrane pass occupies residues 313-335 (LFLIVFFSLVFSVFAIVIGIILY). Residues 336–347 (NKWQDQSRKRFY) are Cytoplasmic-facing. An Endoplasmic reticulum retention signal motif is present at residues 343 to 345 (RKR).

The protein resides in the endoplasmic reticulum membrane. The protein localises to the golgi apparatus membrane. In terms of biological role, may be involved in the regulation of export from the endoplasmic reticulum of a subset of glycoproteins. May function as a regulator of ERGIC-53. The polypeptide is VIP36-like protein (Lman2l) (Mus musculus (Mouse)).